Reading from the N-terminus, the 448-residue chain is Phosphoglucosamine mutase (448 aa).

The active-site Phosphoserine intermediate is the S100. Positions 100, 240, 242, and 244 each coordinate Mg(2+). Position 100 is a phosphoserine (S100).

Belongs to the phosphohexose mutase family. Mg(2+) serves as cofactor. Post-translationally, activated by phosphorylation.

The enzyme catalyses alpha-D-glucosamine 1-phosphate = D-glucosamine 6-phosphate. Functionally, catalyzes the conversion of glucosamine-6-phosphate to glucosamine-1-phosphate. The protein is Phosphoglucosamine mutase of Clostridium perfringens (strain SM101 / Type A).